Consider the following 162-residue polypeptide: NRR repressor homolog 3 (162 aa).

The disordered stretch occupies residues 1-80; it reads MDPTMPTPHT…GHEEEARDED (80 aa). Polar residues predominate over residues 7–24; that stretch reads TPHTISGTSPFPRNSSTA. The span at 37–46 shows a compositional bias: basic residues; it reads PRHRRSRKRD. The segment covering 69–80 has biased composition (basic and acidic residues); it reads GHGHEEEARDED.

Belongs to the NPR1-interactor family. In terms of assembly, interacts with NPR1/NH1. Interacts with NPR3/NH3.

It localises to the nucleus. Its function is as follows. Binds to and represses NPR1/NH1-mediated transcriptional activation of LG2 in vitro. The polypeptide is NRR repressor homolog 3 (Oryza sativa subsp. japonica (Rice)).